Here is a 1080-residue protein sequence, read N- to C-terminus: Putative bifunctional amine oxidase DDB_G0291301 (1080 aa).

A putative sarcosine oxidase region spans residues 1–450; the sequence is MREFLKDDYD…TIAKSTVPTN (450 aa). 10-40 provides a ligand contact to FAD; that stretch reads DVIVCGGGPVGLATAYRCAKAGKKVLCLEKS. The segment at 445–464 is disordered; the sequence is STVPTNQSSNPDGASSTAPT. Residues 450–1080 are putative L-amino-acid oxidase; that stretch reads NQSSNPDGAS…NTAASIGGLK (631 aa). The chain crosses the membrane as a helical span at residues 508 to 528; that stretch reads VGIIGAGMAGLYAAMILQDLG. FAD is bound by residues glutamate 535, arginine 544, and 563 to 564; that span reads GA. Tyrosine 886 is a binding site for substrate. FAD is bound by residues glutamate 978 and 987 to 990; that span reads VIGS.

The protein in the N-terminal section; belongs to the MSOX/MTOX family. It in the C-terminal section; belongs to the flavin monoamine oxidase family. Requires FAD as cofactor.

It localises to the membrane. It catalyses the reaction sarcosine + O2 + H2O = formaldehyde + glycine + H2O2. The catalysed reaction is L-pipecolate + O2 = L-1-piperideine-6-carboxylate + H2O2 + H(+). It carries out the reaction an L-alpha-amino acid + O2 + H2O = a 2-oxocarboxylate + H2O2 + NH4(+). Catalyzes an oxidative deamination of predominantly hydrophobic and aromatic L-amino acids. Metabolizes sarcosine, L-pipecolic acid and L-proline. This chain is Putative bifunctional amine oxidase DDB_G0291301, found in Dictyostelium discoideum (Social amoeba).